The primary structure comprises 131 residues: Global transcriptional regulator Spx 1 (131 aa).

Cysteines 10 and 13 form a disulfide.

This sequence belongs to the ArsC family. Spx subfamily. As to quaternary structure, interacts with the C-terminal domain of the alpha subunit of the RNAP.

The protein localises to the cytoplasm. Global transcriptional regulator that plays a key role in stress response and exerts either positive or negative regulation of genes. Acts by interacting with the C-terminal domain of the alpha subunit of the RNA polymerase (RNAP). This interaction can enhance binding of RNAP to the promoter region of target genes and stimulate their transcription, or block interaction of RNAP with activator. The protein is Global transcriptional regulator Spx 1 of Oceanobacillus iheyensis (strain DSM 14371 / CIP 107618 / JCM 11309 / KCTC 3954 / HTE831).